A 214-amino-acid chain; its full sequence is tRNA (guanine-N(7)-)-methyltransferase (214 aa).

Positions 43, 68, 95, and 117 each coordinate S-adenosyl-L-methionine. Asp-117 is a catalytic residue. Substrate contacts are provided by residues Lys-121, Asp-153, and 191–194 (TEYE).

The protein belongs to the class I-like SAM-binding methyltransferase superfamily. TrmB family.

It catalyses the reaction guanosine(46) in tRNA + S-adenosyl-L-methionine = N(7)-methylguanosine(46) in tRNA + S-adenosyl-L-homocysteine. The protein operates within tRNA modification; N(7)-methylguanine-tRNA biosynthesis. Functionally, catalyzes the formation of N(7)-methylguanine at position 46 (m7G46) in tRNA. This is tRNA (guanine-N(7)-)-methyltransferase from Brevibacillus brevis (strain 47 / JCM 6285 / NBRC 100599).